Here is a 404-residue protein sequence, read N- to C-terminus: Phosphoglycerate kinase (404 aa).

Residues Asp-22–Asn-24, Arg-37, His-60–Arg-63, Arg-119, and Arg-156 each bind substrate. Residues Lys-206, Gly-302, Glu-333, and Gly-359–Ser-362 each bind ATP.

It belongs to the phosphoglycerate kinase family. In terms of assembly, monomer.

It localises to the cytoplasm. It carries out the reaction (2R)-3-phosphoglycerate + ATP = (2R)-3-phospho-glyceroyl phosphate + ADP. Its pathway is carbohydrate degradation; glycolysis; pyruvate from D-glyceraldehyde 3-phosphate: step 2/5. This is Phosphoglycerate kinase from Clavibacter sepedonicus (Clavibacter michiganensis subsp. sepedonicus).